The chain runs to 375 residues: MGLSPAAVLIFLLLGVSQTYAAFSCKDQSGNDVDWFAVYKMPIEKDDGSVTGLAGGVAWYYVDVNKKGTLTPSAKTLDDNDQAIAYTLQQYYDKQNDKTIFHVMYNDEPWGSKSTSGIKLEEILSNRVYSNYTHEDDSTSTAFGHTKGTIFFDGTSGVWLVHSVPLFPNPTKYEYPVSGHDYGQTMLCMTFKYAQLKSIGTQLFFNRPNIYSSNLPTNMAADNADLAKAIAGQYQKGQPFQSVIELETMAGYSFTNFAKSKEFNADLYDTLVAPTLKTDLVVETWRRGSEIPLDCKLTYHANDALSIHVGSTTAFSYTKDHSKMAHSADMTKPWVCIGDINRMTSQYVRGGGTTCISSSFLWKAYSVIATQNNCA.

An N-terminal signal peptide occupies residues Met1 to Ala21. A glycan (N-linked (GlcNAc...) asparagine) is linked at Asn131.

It belongs to the DNase II family.

The catalysed reaction is Endonucleolytic cleavage to nucleoside 3'-phosphates and 3'-phosphooligonucleotide end-products.. Its function is as follows. Hydrolyzes DNA under acidic conditions with a preference for double-stranded DNA. Implicated in apoptosis. This is Deoxyribonuclease-2 (nuc-1) from Caenorhabditis elegans.